Reading from the N-terminus, the 124-residue chain is Histone H2A (124 aa).

Positions 1 to 18 (MSGRGKGGKAKGKSKSRS) are enriched in basic residues. The segment at 1-23 (MSGRGKGGKAKGKSKSRSSRAGL) is disordered. N-acetylserine is present on Ser-2. Phosphoserine is present on Ser-2. Position 104 is an N5-methylglutamine (Gln-104).

Belongs to the histone H2A family. In terms of assembly, the nucleosome is a histone octamer containing two molecules each of H2A, H2B, H3 and H4 assembled in one H3-H4 heterotetramer and two H2A-H2B heterodimers. The octamer wraps approximately 147 bp of DNA. The N-terminal serine is acetylated. That serine is also phosphorylated in approximately 60% of the molecules isolated from erythrocytes.

It localises to the nucleus. The protein resides in the chromosome. Core component of nucleosome. Nucleosomes wrap and compact DNA into chromatin, limiting DNA accessibility to the cellular machineries which require DNA as a template. Histones thereby play a central role in transcription regulation, DNA repair, DNA replication and chromosomal stability. DNA accessibility is regulated via a complex set of post-translational modifications of histones, also called histone code, and nucleosome remodeling. The protein is Histone H2A of Sipunculus nudus (Sipunculan worm).